The sequence spans 290 residues: Ribosomal protein L11 methyltransferase (290 aa).

S-adenosyl-L-methionine contacts are provided by Thr-135, Gly-158, Asp-180, and Asn-227.

It belongs to the methyltransferase superfamily. PrmA family.

It is found in the cytoplasm. The catalysed reaction is L-lysyl-[protein] + 3 S-adenosyl-L-methionine = N(6),N(6),N(6)-trimethyl-L-lysyl-[protein] + 3 S-adenosyl-L-homocysteine + 3 H(+). In terms of biological role, methylates ribosomal protein L11. The polypeptide is Ribosomal protein L11 methyltransferase (Chelativorans sp. (strain BNC1)).